Consider the following 234-residue polypeptide: HTH-type transcriptional regulator ArcR (234 aa).

40–129 lines the a nucleoside 3',5'-cyclic phosphate pocket; the sequence is VRHYTKGQVI…MAFLCKANDD (90 aa). In terms of domain architecture, HTH crp-type spans 155–228; sequence KFAKDRIIKL…HKNWLVSKHL (74 aa). Positions 188-207 form a DNA-binding region, H-T-H motif; that stretch reads IQLMSDMAGISRETAGHIIH.

It localises to the cytoplasm. Positively regulates the expression of the arcABDCR operon under anaerobic conditions, thus playing an essential role in arginine catabolism. May also control the expression of genes encoding proteins which are involved in anaerobic metabolism. Can bind cyclic AMP. This chain is HTH-type transcriptional regulator ArcR (arcR), found in Staphylococcus aureus (strain USA300 / TCH1516).